Here is a 378-residue protein sequence, read N- to C-terminus: 3-hydroxyisobutyryl-CoA hydrolase 1 (378 aa).

N-acetylalanine is present on alanine 2. The substrate site is built by glutamate 94, glycine 119, glutamate 142, and aspartate 150.

This sequence belongs to the enoyl-CoA hydratase/isomerase family. As to expression, expressed in roots, leaves, flowers and siliques.

It is found in the peroxisome. It catalyses the reaction 3-hydroxy-2-methylpropanoyl-CoA + H2O = 3-hydroxy-2-methylpropanoate + CoA + H(+). It participates in amino-acid degradation; L-valine degradation. Inhibited by copper. Involved in valine catabolism. May be indirectly involved in benzoic acid biosynthesis and in cold signaling and cold tolerance. The polypeptide is 3-hydroxyisobutyryl-CoA hydrolase 1 (CHY1) (Arabidopsis thaliana (Mouse-ear cress)).